Consider the following 315-residue polypeptide: Taste receptor type 2 member 3 (315 aa).

Residues 1–5 (MGLTE) lie on the Extracellular side of the membrane. Residues 6 to 26 (GLFLILSGTQFALGILVNCFI) form a helical membrane-spanning segment. Residues 27-41 (GLVNGSSWFKTKRMS) are Cytoplasmic-facing. Residues 42-62 (LSDFIITTLAFLRIILLCIIL) form a helical membrane-spanning segment. The Extracellular segment spans residues 63–93 (TDSFLIEFSPNAHDSGVIMQIIDVSWTFTNH). The chain crosses the membrane as a helical span at residues 94 to 114 (LSIWLATCLGVLYCLKIASFS). Residues 115–127 (HPTFLWLKWRVSR) are Cytoplasmic-facing. The chain crosses the membrane as a helical span at residues 128–148 (VMVWMLLGVLLLSCGSTASLI). Over 149–185 (NEFKLYSVFRGIEATXNVTEHFRKKRSEYYLIHVLGT) the chain is Extracellular. N-linked (GlcNAc...) asparagine glycosylation occurs at Asn-165. The chain crosses the membrane as a helical span at residues 186–206 (LWYLPPLIVSLAAYFLLIFSL). Residues 207-233 (GRHTRQMLQNGTSSRDPSTEAHKRAIR) are Cytoplasmic-facing. Residues 234–254 (IILSSFFLFLLYFLAFLIASF) traverse the membrane as a helical segment. The Extracellular segment spans residues 255 to 265 (GNFLPKTKMAK). Residues 266 to 286 (MIGEVMTMFYPAGHSFILILG) traverse the membrane as a helical segment. The Cytoplasmic portion of the chain corresponds to 287–315 (NSKLKQTFVEMLRCESGHLKPGSKGPIFS).

Belongs to the G-protein coupled receptor T2R family.

The protein resides in the membrane. Its function is as follows. Gustducin-coupled receptor implicated in the perception of bitter compounds in the oral cavity and the gastrointestinal tract. Signals through PLCB2 and the calcium-regulated cation channel TRPM5. This Pongo pygmaeus (Bornean orangutan) protein is Taste receptor type 2 member 3 (TAS2R3).